A 333-amino-acid chain; its full sequence is Holliday junction branch migration complex subunit RuvB (333 aa).

The segment at 1–181 is large ATPase domain (RuvB-L); that stretch reads MNDILNKEPM…FGISSHMEYY (181 aa). ATP is bound by residues leucine 20, arginine 21, glycine 62, lysine 65, threonine 66, threonine 67, 128-130, arginine 171, tyrosine 181, and arginine 218; that span reads EDF. Residue threonine 66 participates in Mg(2+) binding. The tract at residues 182–252 is small ATPAse domain (RuvB-S); the sequence is QERDLEEIVK…ITDKALSILD (71 aa). Positions 255–333 are head domain (RuvB-H); sequence AAGLDYIDQK…HLGYVYNEED (79 aa). DNA contacts are provided by arginine 291, arginine 310, and arginine 315.

It belongs to the RuvB family. As to quaternary structure, homohexamer. Forms an RuvA(8)-RuvB(12)-Holliday junction (HJ) complex. HJ DNA is sandwiched between 2 RuvA tetramers; dsDNA enters through RuvA and exits via RuvB. An RuvB hexamer assembles on each DNA strand where it exits the tetramer. Each RuvB hexamer is contacted by two RuvA subunits (via domain III) on 2 adjacent RuvB subunits; this complex drives branch migration. In the full resolvosome a probable DNA-RuvA(4)-RuvB(12)-RuvC(2) complex forms which resolves the HJ.

The protein localises to the cytoplasm. It catalyses the reaction ATP + H2O = ADP + phosphate + H(+). Functionally, the RuvA-RuvB-RuvC complex processes Holliday junction (HJ) DNA during genetic recombination and DNA repair, while the RuvA-RuvB complex plays an important role in the rescue of blocked DNA replication forks via replication fork reversal (RFR). RuvA specifically binds to HJ cruciform DNA, conferring on it an open structure. The RuvB hexamer acts as an ATP-dependent pump, pulling dsDNA into and through the RuvAB complex. RuvB forms 2 homohexamers on either side of HJ DNA bound by 1 or 2 RuvA tetramers; 4 subunits per hexamer contact DNA at a time. Coordinated motions by a converter formed by DNA-disengaged RuvB subunits stimulates ATP hydrolysis and nucleotide exchange. Immobilization of the converter enables RuvB to convert the ATP-contained energy into a lever motion, pulling 2 nucleotides of DNA out of the RuvA tetramer per ATP hydrolyzed, thus driving DNA branch migration. The RuvB motors rotate together with the DNA substrate, which together with the progressing nucleotide cycle form the mechanistic basis for DNA recombination by continuous HJ branch migration. Branch migration allows RuvC to scan DNA until it finds its consensus sequence, where it cleaves and resolves cruciform DNA. The sequence is that of Holliday junction branch migration complex subunit RuvB from Lactococcus lactis subsp. lactis (strain IL1403) (Streptococcus lactis).